Here is a 139-residue protein sequence, read N- to C-terminus: MVKKLLTILSIAATAGSLSIGTASAQDAKAGEAVFKQCMTCHRADKNMVGPALGGVVGRKAGTAAGFTYSPLNHNSGEAGLVWTADNIINYLNDPNAFLKKFLTDKGKADQAVGVTKMTFKLANEQQRKDVVAYLATLK.

Residues methionine 1–alanine 25 form the signal peptide. A Pyrrolidone carboxylic acid modification is found at glutamine 26. Cysteine 38, cysteine 41, histidine 42, and methionine 118 together coordinate heme c.

Belongs to the cytochrome c family. Post-translationally, binds 1 heme c group covalently per subunit.

Functionally, cytochrome c2 is found mainly in purple, non-sulfur, photosynthetic bacteria where it functions as the electron donor to the oxidized bacteriochlorophyll in the photophosphorylation pathway. However, it may also have a role in the respiratory chain and is found in some non-photosynthetic bacteria. This Rhodopseudomonas palustris (strain ATCC BAA-98 / CGA009) protein is Cytochrome c2 (cycA).